The following is a 288-amino-acid chain: 4-diphosphocytidyl-2-C-methyl-D-erythritol kinase (288 aa).

Residue Lys-11 is part of the active site. Pro-95–Ser-105 contributes to the ATP binding site. Asp-137 is an active-site residue.

This sequence belongs to the GHMP kinase family. IspE subfamily.

It catalyses the reaction 4-CDP-2-C-methyl-D-erythritol + ATP = 4-CDP-2-C-methyl-D-erythritol 2-phosphate + ADP + H(+). It functions in the pathway isoprenoid biosynthesis; isopentenyl diphosphate biosynthesis via DXP pathway; isopentenyl diphosphate from 1-deoxy-D-xylulose 5-phosphate: step 3/6. In terms of biological role, catalyzes the phosphorylation of the position 2 hydroxy group of 4-diphosphocytidyl-2C-methyl-D-erythritol. The sequence is that of 4-diphosphocytidyl-2-C-methyl-D-erythritol kinase from Lachnospira eligens (strain ATCC 27750 / DSM 3376 / VPI C15-48 / C15-B4) (Eubacterium eligens).